A 101-amino-acid polypeptide reads, in one-letter code: ATP synthase subunit c (101 aa).

2 consecutive transmembrane segments (helical) span residues 31–51 (AFAY…GAGQ) and 81–101 (AISE…IFVG).

It belongs to the ATPase C chain family. F-type ATPases have 2 components, F(1) - the catalytic core - and F(0) - the membrane proton channel. F(1) has five subunits: alpha(3), beta(3), gamma(1), delta(1), epsilon(1). F(0) has three main subunits: a(1), b(2) and c(10-14). The alpha and beta chains form an alternating ring which encloses part of the gamma chain. F(1) is attached to F(0) by a central stalk formed by the gamma and epsilon chains, while a peripheral stalk is formed by the delta and b chains.

It localises to the cell membrane. F(1)F(0) ATP synthase produces ATP from ADP in the presence of a proton or sodium gradient. F-type ATPases consist of two structural domains, F(1) containing the extramembraneous catalytic core and F(0) containing the membrane proton channel, linked together by a central stalk and a peripheral stalk. During catalysis, ATP synthesis in the catalytic domain of F(1) is coupled via a rotary mechanism of the central stalk subunits to proton translocation. In terms of biological role, key component of the F(0) channel; it plays a direct role in translocation across the membrane. A homomeric c-ring of between 10-14 subunits forms the central stalk rotor element with the F(1) delta and epsilon subunits. In Mesomycoplasma hyopneumoniae (strain 232) (Mycoplasma hyopneumoniae), this protein is ATP synthase subunit c.